The primary structure comprises 380 residues: MRILADENIPLVHAFFSAFGEIRQLPGRAIVSGSLGDADVLLVRSVTRVDAALLEGSRVRFVGTCTIGTDHLDLDYLRRRGIAWASAPGCNARGVVDYVLGSLLSLAERQGVDLASRCYGVVGAGQVGGRLVEVLRGLGWRVLVCDPPRQALERGDFVDLPTLLRECDVLSVHTPLTHEGAHPTRHLFGREQLARLRPGTWLINASRGAVVDNRALREALAGRTDLQAVLDVWEGEPLVDVALAGLCHIATPHIAGYSLDGKLRGTAQVYRAFCEQQGVPPGVLLDELLPPPWLGELGLDGRADPAWALATLCRAVYDPRRDDADFRRSLEGDEQARRSAFDALRKHYPPRREIDGLRVRLSGEAPRLRQLVRALGAEPV.

Substrate-binding residues include Ser-45 and Thr-66. NAD(+)-binding positions include 126-127, Asp-146, Thr-174, 205-207, and Asp-231; these read QV and ASR. The active site involves Arg-207. Glu-236 is an active-site residue. The active-site Proton donor is the His-253. Gly-256 contributes to the NAD(+) binding site. Position 257 (Tyr-257) interacts with substrate.

It belongs to the D-isomer specific 2-hydroxyacid dehydrogenase family. PdxB subfamily. In terms of assembly, homodimer.

The protein resides in the cytoplasm. The catalysed reaction is 4-phospho-D-erythronate + NAD(+) = (R)-3-hydroxy-2-oxo-4-phosphooxybutanoate + NADH + H(+). The protein operates within cofactor biosynthesis; pyridoxine 5'-phosphate biosynthesis; pyridoxine 5'-phosphate from D-erythrose 4-phosphate: step 2/5. In terms of biological role, catalyzes the oxidation of erythronate-4-phosphate to 3-hydroxy-2-oxo-4-phosphonooxybutanoate. In Azotobacter vinelandii (strain DJ / ATCC BAA-1303), this protein is Erythronate-4-phosphate dehydrogenase.